Here is a 1393-residue protein sequence, read N- to C-terminus: DNA-directed RNA polymerase subunit beta' (1393 aa).

Zn(2+) is bound by residues Cys70, Cys72, Cys85, and Cys88. Mg(2+) is bound by residues Asp461, Asp463, and Asp465. Cys815, Cys889, Cys896, and Cys899 together coordinate Zn(2+).

It belongs to the RNA polymerase beta' chain family. In terms of assembly, the RNAP catalytic core consists of 2 alpha, 1 beta, 1 beta' and 1 omega subunit. When a sigma factor is associated with the core the holoenzyme is formed, which can initiate transcription. Requires Mg(2+) as cofactor. It depends on Zn(2+) as a cofactor.

It carries out the reaction RNA(n) + a ribonucleoside 5'-triphosphate = RNA(n+1) + diphosphate. In terms of biological role, DNA-dependent RNA polymerase catalyzes the transcription of DNA into RNA using the four ribonucleoside triphosphates as substrates. The chain is DNA-directed RNA polymerase subunit beta' from Vesicomyosocius okutanii subsp. Calyptogena okutanii (strain HA).